A 506-amino-acid chain; its full sequence is Trans-cinnamate 4-monooxygenase (506 aa).

The helical transmembrane segment at 3–23 (LLLLEKTLLALFIAATIAVTI) threads the bilayer. (E)-cinnamate is bound by residues 213–218 (RSRLAQ) and Ala307. Cys448 serves as a coordination point for heme.

This sequence belongs to the cytochrome P450 family. Heme serves as cofactor.

Its subcellular location is the membrane. It carries out the reaction (E)-cinnamate + reduced [NADPH--hemoprotein reductase] + O2 = (E)-4-coumarate + oxidized [NADPH--hemoprotein reductase] + H2O + H(+). The protein operates within phenylpropanoid metabolism; trans-4-coumarate biosynthesis; trans-4-coumarate from trans-cinnamate: step 1/1. In terms of biological role, catalyzes the first oxidative step of the phenylpropanoid pathway in higher plants by transforming trans-cinnamate into p-coumarate. The compounds formed by this pathway are essential components for lignification, pollination, and defense against ultraviolet light, predators and pathogens. This is Trans-cinnamate 4-monooxygenase (CYP73A3) from Medicago sativa (Alfalfa).